A 308-amino-acid chain; its full sequence is Spermidine synthase 1 (308 aa).

The 238-residue stretch at 17-254 (PGWFSEISPL…GVIGFMLCST (238 aa)) folds into the PABS domain. An S-adenosyl 3-(methylsulfanyl)propylamine-binding site is contributed by Q48. Y78 contacts putrescine. S-adenosyl 3-(methylsulfanyl)propylamine-binding positions include Q79, D103, E123, 154–155 (DG), and D173. Catalysis depends on D173, which acts as the Proton acceptor. Residues 173 to 176 (DSSD) and Y242 contribute to the putrescine site.

Belongs to the spermidine/spermine synthase family.

The enzyme catalyses S-adenosyl 3-(methylsulfanyl)propylamine + putrescine = S-methyl-5'-thioadenosine + spermidine + H(+). It participates in amine and polyamine biosynthesis; spermidine biosynthesis; spermidine from putrescine: step 1/1. The sequence is that of Spermidine synthase 1 from Datura stramonium (Jimsonweed).